Reading from the N-terminus, the 473-residue chain is Response regulator protein FleR (473 aa).

In terms of domain architecture, Response regulatory spans 4-118; it reads KVLLVEDDRA…ALLDLVARHA (115 aa). Residue Asp-53 is modified to 4-aspartylphosphate. A Sigma-54 factor interaction domain is found at 130–359; sequence PVALEPASRQ…LDNAIQRALI (230 aa). Residues 158–165 and 221–230 each bind ATP; these read GESGTGKE and ADGGTILLDE.

Functionally, member of the two-component regulatory system FleS/FleR that regulates the expression of multiple genes involved in flagellar synthesis, adhesion, swarming, motility and antibiotic resistance. May function as a transcriptional activator by direct binding to a cis-acting sequence upstream of the target genes. This Pseudomonas aeruginosa (strain ATCC 15692 / DSM 22644 / CIP 104116 / JCM 14847 / LMG 12228 / 1C / PRS 101 / PAO1) protein is Response regulator protein FleR.